The chain runs to 417 residues: UDP-N-acetylglucosamine 1-carboxyvinyltransferase (417 aa).

22 to 23 is a phosphoenolpyruvate binding site; the sequence is KN. Arg93 contributes to the UDP-N-acetyl-alpha-D-glucosamine binding site. Cys117 (proton donor) is an active-site residue. Cys117 carries the post-translational modification 2-(S-cysteinyl)pyruvic acid O-phosphothioketal. UDP-N-acetyl-alpha-D-glucosamine-binding positions include 122–126, Asp305, and Ile327; that span reads RPVDQ.

The protein belongs to the EPSP synthase family. MurA subfamily.

The protein localises to the cytoplasm. It catalyses the reaction phosphoenolpyruvate + UDP-N-acetyl-alpha-D-glucosamine = UDP-N-acetyl-3-O-(1-carboxyvinyl)-alpha-D-glucosamine + phosphate. The protein operates within cell wall biogenesis; peptidoglycan biosynthesis. Its function is as follows. Cell wall formation. Adds enolpyruvyl to UDP-N-acetylglucosamine. In Dechloromonas aromatica (strain RCB), this protein is UDP-N-acetylglucosamine 1-carboxyvinyltransferase.